The following is a 436-amino-acid chain: 2-aminohexano-6-lactam racemase (436 aa).

Pyridoxal 5'-phosphate-binding positions include 110–111 (GS), tyrosine 137, and 238–241 (DEVK). The active site involves tyrosine 137. Lysine 267 is modified (N6-(pyridoxal phosphate)lysine). Threonine 295 lines the pyridoxal 5'-phosphate pocket.

This sequence belongs to the class-III pyridoxal-phosphate-dependent aminotransferase family. As to quaternary structure, monomer. Pyridoxal 5'-phosphate serves as cofactor.

It carries out the reaction L-2-aminohexano-6-lactam = D-2-aminohexano-6-lactam. In terms of biological role, catalyzes the interconversion of L-alpha-amino-epsilon-caprolactam and D-alpha-amino-epsilon-caprolactam. This chain is 2-aminohexano-6-lactam racemase, found in Achromobacter obae.